Consider the following 175-residue polypeptide: Viral interleukin-10 homolog (175 aa).

The signal sequence occupies residues 1-19; the sequence is MLSVMVSSSLVLIVFFLGA. 2 disulfide bridges follow: C37/C127 and C81/C132. N151 is a glycosylation site (N-linked (GlcNAc...) asparagine; by host).

Belongs to the IL-10 family. In terms of assembly, homodimer; disulfide-linked.

It localises to the secreted. Functional viral IL-10 homolog. Can bind to the human IL-10 receptor and compete with human IL-10 for binding sites. Requires both subunits of the human IL-10 receptor complex to induce signal transduction events and biological activities. IL-10 signaling pathway has several immunosuppressive activities that are exploited by the virus. Inhibits TLR-induced type I interferon production in host plasmacytoid dendritic cells. The sequence is that of Viral interleukin-10 homolog (UL111A) from Human cytomegalovirus (strain AD169) (HHV-5).